The chain runs to 377 residues: Leukocyte elastase inhibitor (377 aa).

M1 is modified (N-acetylmethionine).

This sequence belongs to the serpin family. Ov-serpin subfamily.

It is found in the cytoplasm. Regulates the activity of the neutrophil proteases. In Xenopus tropicalis (Western clawed frog), this protein is Leukocyte elastase inhibitor (serpinb1).